A 349-amino-acid chain; its full sequence is Succinylglutamate desuccinylase (349 aa).

Zn(2+)-binding residues include His70, Glu73, and His166. Glu229 is a catalytic residue.

It belongs to the AspA/AstE family. Succinylglutamate desuccinylase subfamily. Zn(2+) serves as cofactor.

It catalyses the reaction N-succinyl-L-glutamate + H2O = L-glutamate + succinate. Its pathway is amino-acid degradation; L-arginine degradation via AST pathway; L-glutamate and succinate from L-arginine: step 5/5. Transforms N(2)-succinylglutamate into succinate and glutamate. The protein is Succinylglutamate desuccinylase of Burkholderia pseudomallei (strain 1710b).